The sequence spans 822 residues: Collagen alpha chain CG42342 (822 aa).

Disordered regions lie at residues 1 to 45 (MRKH…VEAP) and 66 to 99 (RLAP…KERP). The Cytoplasmic portion of the chain corresponds to 1–104 (MRKHKAPPSG…SKERPRPTVR (104 aa)). The segment covering 11-25 (SPRTMAQDNSQSEPS) has biased composition (polar residues). A compositionally biased stretch (low complexity) spans 76–94 (INNSNNNSNISNNSSNSSS). The helical; Signal-anchor for type II membrane protein transmembrane segment at 105 to 125 (FISLLHVASYVLCLCAFSFAL) threads the bilayer. Over 126–822 (YGNVRQTRLE…EYQDNLHNNE (697 aa)) the chain is Extracellular. Residues 131-162 (QTRLEQRMQRLQQLDARIVELELRLEQQQLLH) are a coiled coil. Disordered stretches follow at residues 169–188 (QVLA…NGSQ), 205–297 (VSHL…GHPG), and 345–822 (LKGE…HNNE). A coiled-coil region spans residues 194–222 (VRRELHRLRRDVSHLQLTRRQQRRQAAEA). Collagen-like domains are found at residues 241–299 (QPGP…PGMD), 350–409 (GEPG…KGDR), 430–469 (GPPG…GKRG), 493–526 (RGPP…PGSL), 527–586 (GPRG…KGDK), 621–680 (GPPG…SGKA), and 681–740 (GIPG…KGEQ). Pro residues predominate over residues 242-251 (PGPPGPPGPP). Positions 284 to 293 (PGDKGQKGDV) are enriched in basic and acidic residues. Residues 360 to 402 (EAGQPGAPGERGPPGEIGAQGPQGEAGQPGVAGPPGVAGAPGT) are compositionally biased toward low complexity. Residues 403–412 (KGDKGDRGDR) show a composition bias toward basic and acidic residues. The segment covering 431 to 443 (PPGPAGPPGPPGE) has biased composition (pro residues). Positions 504–517 (KDGRDGRDGSKGEP) are enriched in basic and acidic residues. Residues 522 to 540 (EPGSLGPRGLDGLPGEPGI) are compositionally biased toward low complexity. Residues 567-579 (LMGPPGLPGPPGY) show a composition bias toward pro residues. Basic and acidic residues predominate over residues 583 to 602 (KGDKGDRGDSYRKMRRRQDD). A compositionally biased stretch (pro residues) spans 619-628 (PPGPPGPMGP). The span at 638-655 (RGLDGRKGDPGEKGHKGD) shows a compositional bias: basic and acidic residues. Residues 658-668 (PMGLPGPMGMR) are compositionally biased toward low complexity. Residues 790–822 (TSDYEQEEEEDDEQAEDNENEYDEYQDNLHNNE) adopt a coiled-coil conformation. Acidic residues predominate over residues 793-815 (YEQEEEEDDEQAEDNENEYDEYQ).

The protein resides in the cell membrane. The protein is Collagen alpha chain CG42342 of Drosophila melanogaster (Fruit fly).